We begin with the raw amino-acid sequence, 387 residues long: Succinate--CoA ligase [ADP-forming] subunit beta (387 aa).

Residues 9–244 enclose the ATP-grasp domain; the sequence is KHILSKFGVN…YDEEIKEEIE (236 aa). ATP is bound by residues Lys-46, 53–55, Glu-99, Cys-102, and Glu-107; that span reads GRG. Mg(2+) is bound by residues Asn-199 and Asp-213. Substrate is bound by residues Asn-264 and 321 to 323; that span reads GIM.

This sequence belongs to the succinate/malate CoA ligase beta subunit family. As to quaternary structure, heterotetramer of two alpha and two beta subunits. Mg(2+) is required as a cofactor.

It catalyses the reaction succinate + ATP + CoA = succinyl-CoA + ADP + phosphate. It carries out the reaction GTP + succinate + CoA = succinyl-CoA + GDP + phosphate. The protein operates within carbohydrate metabolism; tricarboxylic acid cycle; succinate from succinyl-CoA (ligase route): step 1/1. Functionally, succinyl-CoA synthetase functions in the citric acid cycle (TCA), coupling the hydrolysis of succinyl-CoA to the synthesis of either ATP or GTP and thus represents the only step of substrate-level phosphorylation in the TCA. The beta subunit provides nucleotide specificity of the enzyme and binds the substrate succinate, while the binding sites for coenzyme A and phosphate are found in the alpha subunit. The protein is Succinate--CoA ligase [ADP-forming] subunit beta of Ehrlichia chaffeensis (strain ATCC CRL-10679 / Arkansas).